The primary structure comprises 108 residues: Ig kappa chain V-VI region NQ2-6.1 (108 aa).

The framework-1 stretch occupies residues 1–23 (QILLTQSPAIMSASPGQKVTMTC). Cysteine 23 and cysteine 87 are joined by a disulfide. Positions 24-33 (SASSSVSYMY) are complementarity-determining-1. The segment at 34 to 48 (WYQQKPGSSPRLLIY) is framework-2. A complementarity-determining-2 region spans residues 49–55 (DTSNLAS). The tract at residues 56 to 87 (GVPVRFSGSGSATSYSLTITRMQAEDAATYYC) is framework-3. The complementarity-determining-3 stretch occupies residues 88–98 (QQWSSYPPMLT). The interval 99 to 108 (FGAGTKLELK) is framework-4.

The chain is Ig kappa chain V-VI region NQ2-6.1 from Mus musculus (Mouse).